Reading from the N-terminus, the 533-residue chain is Putative replication factor C large subunit (533 aa).

Polar residues predominate over residues 1-11; the sequence is MSKTAKNTKTI. Residues 1-31 form a disordered region; the sequence is MSKTAKNTKTIKSVKSVNKDNKPNKDNKDDK. Over residues 17 to 31 the composition is skewed to basic and acidic residues; it reads VNKDNKPNKDNKDDK.

The protein belongs to the activator 1 large subunit family.

Part of the RFC clamp loader complex which loads the PCNA sliding clamp onto DNA. In Acanthamoeba polyphaga (Amoeba), this protein is Putative replication factor C large subunit.